The sequence spans 548 residues: C2H2-type transcription factor MSN2 (548 aa).

2 consecutive C2H2-type zinc fingers follow at residues 420-448 (FKCE…QDKP) and 449-471 (FECN…ARTH).

Interacts with HOG1/OSM1.

It is found in the nucleus. The protein resides in the cytoplasm. Its function is as follows. Transcription factor that acts as a key downstream transcription factor in the HOG1-MAPK pathway. Regulates the expression of a series of downstream genes and controls vegetative growth, conidiogenesis, cell wall integrity, stress response, mitochondrial morphology, and pathogenicity. Binds to a putative promoter region 1500 bp upstream of the start codons of the target genes MGG_07019, POX1 and DCI1. Binds to the AGGGG and CCCCT motif of the COS1 promoter region. Involved in fatty acid beta-oxidation by directly regulating the expression of the dienoyl-CoA isomerase DCI1, thereby facilitating invasive hyphal growth during the early infection stage. Targets also the 3-methylglutaconyl-CoA hydratase-encoding gene (AUH1) to control mitochondrial morphology and mitophagy, which are critical for the infectious growth of the pathogen. The protein is C2H2-type transcription factor MSN2 of Pyricularia oryzae (strain 70-15 / ATCC MYA-4617 / FGSC 8958) (Rice blast fungus).